Reading from the N-terminus, the 286-residue chain is Large ribosomal subunit protein uL4m (286 aa).

The N-terminal 26 residues, 1 to 26 (MTIKRNLVKTLQSIRYQATTATAHAE), are a transit peptide targeting the mitochondrion. A disordered region spans residues 85–132 (RRVGASNPPGRSENGFSRRKLMPQKGSGRARVGDANSPTRHNGGRALA).

This sequence belongs to the universal ribosomal protein uL4 family. As to quaternary structure, component of the mitochondrial large ribosomal subunit (mt-LSU). Mature yeast 74S mitochondrial ribosomes consist of a small (37S) and a large (54S) subunit. The 37S small subunit contains a 15S ribosomal RNA (15S mt-rRNA) and 34 different proteins. The 54S large subunit contains a 21S rRNA (21S mt-rRNA) and 46 different proteins.

The protein localises to the mitochondrion. Component of the mitochondrial ribosome (mitoribosome), a dedicated translation machinery responsible for the synthesis of mitochondrial genome-encoded proteins, including at least some of the essential transmembrane subunits of the mitochondrial respiratory chain. The mitoribosomes are attached to the mitochondrial inner membrane and translation products are cotranslationally integrated into the membrane. This is Large ribosomal subunit protein uL4m (YML6) from Saccharomyces cerevisiae (strain ATCC 204508 / S288c) (Baker's yeast).